The primary structure comprises 274 residues: Ceramide synthase (274 aa).

Positions 34-261 (ADAVIVSARL…ICRGACRLFW (228 aa)) constitute a TLC domain. 4 helical membrane passes run 130 to 150 (FLMV…SVVW), 159 to 179 (LGCM…KILI), 194 to 214 (ALML…LYWA), and 223 to 243 (LLAV…LLLA).

In terms of tissue distribution, expressed in testis. Expressed in the retina with higher expression levels in the macular than in the peripheral region.

It localises to the golgi apparatus membrane. It is found in the endoplasmic reticulum membrane. It catalyses the reaction sphing-4-enine + octadecanoyl-CoA = N-octadecanoylsphing-4-enine + CoA + H(+). The enzyme catalyses eicosanoyl-CoA + sphing-4-enine = N-eicosanoyl-sphing-4-enine + CoA + H(+). The catalysed reaction is sphing-4-enine + hexadecanoyl-CoA = N-hexadecanoylsphing-4-enine + CoA + H(+). In terms of biological role, involved in ceramide synthesis. In Homo sapiens (Human), this protein is Ceramide synthase.